Reading from the N-terminus, the 246-residue chain is Major prion protein (246 aa).

The first 15 residues, 1–15, serve as a signal peptide directing secretion; that stretch reads MLVLFVATWSDLGLC. The segment at 16–223 is interaction with GRB2, ERI3 and SYN1; it reads KKRPKPGGWN…ESQAYYQRGS (208 aa). The interval 18–102 is disordered; sequence RPKPGGWNTG…HKPSKPKTSM (85 aa). Tandem repeats lie at residues 44 to 52, 53 to 60, 61 to 68, 69 to 76, and 77 to 84. Residues 44–84 form a 5 X 8 AA tandem repeats of P-H-G-G-G-W-G-Q region; sequence PQGGGGWGQPHGGGWGQPHGGGWGQPHGGGWGQPHGGGWGQ. Gly residues predominate over residues 45–88; it reads QGGGGWGQPHGGGWGQPHGGGWGQPHGGGWGQPHGGGWGQGGGT. 12 residues coordinate Cu(2+): His-54, Gly-55, Gly-56, His-62, Gly-63, Gly-64, His-70, Gly-71, Gly-72, His-78, Gly-79, and Gly-80. Over residues 91 to 102 the composition is skewed to basic residues; it reads QWHKPSKPKTSM. A disulfide bond links Cys-172 and Cys-207. Asn-174 and Asn-190 each carry an N-linked (GlcNAc...) asparagine glycan. Ser-223 carries GPI-anchor amidated serine lipidation. Residues 224 to 246 constitute a propeptide, removed in mature form; it reads SMVLFSSPPVILLISFLIFLIVG.

It belongs to the prion family. In terms of assembly, monomer and homodimer. Has a tendency to aggregate into amyloid fibrils containing a cross-beta spine, formed by a steric zipper of superposed beta-strands. Soluble oligomers may represent an intermediate stage on the path to fibril formation. Copper binding may promote oligomerization. Interacts with GRB2, APP, ERI3/PRNPIP and SYN1. Mislocalized cytosolically exposed PrP interacts with MGRN1; this interaction alters MGRN1 subcellular location and causes lysosomal enlargement. Interacts with KIAA1191.

The protein localises to the cell membrane. The protein resides in the golgi apparatus. Functionally, its primary physiological function is unclear. Has cytoprotective activity against internal or environmental stresses. May play a role in neuronal development and synaptic plasticity. May be required for neuronal myelin sheath maintenance. May play a role in iron uptake and iron homeostasis. Soluble oligomers are toxic to cultured neuroblastoma cells and induce apoptosis (in vitro). Association with GPC1 (via its heparan sulfate chains) targets PRNP to lipid rafts. Also provides Cu(2+) or Zn(2+) for the ascorbate-mediated GPC1 deaminase degradation of its heparan sulfate side chains. The sequence is that of Major prion protein (PRNP) from Cercopithecus mona (Mona monkey).